The chain runs to 478 residues: WD repeat-containing protein AAC3 (478 aa).

Disordered regions lie at residues H33–Q53 and S106–N140. The span at S106–S125 shows a compositional bias: low complexity. Residues K126–N140 are compositionally biased toward polar residues. 7 WD repeats span residues G163–N202, G226–S268, N270–I307, F310–V349, G357–T396, K399–T438, and E440–S478.

Belongs to the THOC3 family.

This is WD repeat-containing protein AAC3 (AAC3) from Dictyostelium discoideum (Social amoeba).